The primary structure comprises 104 residues: Small ribosomal subunit protein uS10 (104 aa).

The protein belongs to the universal ribosomal protein uS10 family. In terms of assembly, part of the 30S ribosomal subunit.

Involved in the binding of tRNA to the ribosomes. In Buchnera aphidicola subsp. Baizongia pistaciae (strain Bp), this protein is Small ribosomal subunit protein uS10.